A 379-amino-acid polypeptide reads, in one-letter code: L-lactate dehydrogenase (379 aa).

The 379-residue stretch at 1-379 (MIISASTDYR…ITSDLLVKER (379 aa)) folds into the FMN hydroxy acid dehydrogenase domain. Residue Tyr-24 coordinates substrate. Positions 106 and 127 each coordinate FMN. Tyr-129 lines the substrate pocket. An FMN-binding site is contributed by Thr-155. Residue Arg-164 coordinates substrate. Lys-251 lines the FMN pocket. His-275 functions as the Proton acceptor in the catalytic mechanism. Position 278 (Arg-278) interacts with substrate. Residue 306–330 (DSGIRTGLDVVRMLALGADTVLLGR) coordinates FMN.

This sequence belongs to the FMN-dependent alpha-hydroxy acid dehydrogenase family. As to quaternary structure, homotetramer. The cofactor is FMN.

The protein resides in the cell inner membrane. The enzyme catalyses (S)-lactate + A = pyruvate + AH2. Functionally, catalyzes the conversion of L-lactate to pyruvate. Is coupled to the respiratory chain. The polypeptide is L-lactate dehydrogenase (Ectopseudomonas mendocina (strain ymp) (Pseudomonas mendocina)).